Reading from the N-terminus, the 171-residue chain is Tubulin polymerization-promoting protein family member 2 (171 aa).

Residues 120–171 (LTDTSKYTGTHKERFDESGKGKGIAGREDVTDNSGYVSGYKGAGTYDKKGSN) are disordered. Residues 129 to 149 (THKERFDESGKGKGIAGREDV) are compositionally biased toward basic and acidic residues.

It belongs to the TPPP family.

The protein localises to the cytoplasm. It is found in the cytosol. The protein resides in the cell projection. Its subcellular location is the cilium. It localises to the flagellum. Functionally, probable regulator of microtubule dynamics required for sperm motility. In contrast to other members of the family, has no microtubule bundling activity. This chain is Tubulin polymerization-promoting protein family member 2, found in Bos taurus (Bovine).